A 519-amino-acid chain; its full sequence is Zinc finger protein 692 (519 aa).

The disordered stretch occupies residues 123–314; that stretch reads GPSLSPTPSE…PAWDEDTAQI (192 aa). The segment covering 145 to 155 has biased composition (polar residues); it reads RSWCSEATSGQ. S162 is modified (phosphoserine). The span at 164–173 shows a compositional bias: basic and acidic residues; sequence HDERTQEARL. The span at 177 to 187 shows a compositional bias: pro residues; it reads VGPPPETFPPP. A compositionally biased stretch (acidic residues) spans 188 to 206; that stretch reads GEEEGEEEEDNDEDEEEML. Position 231 is a phosphoserine (S231). Residues 247 to 266 show a composition bias toward low complexity; it reads AALSSPLAVPALSASSLSSR. Positions 277-303 are enriched in polar residues; that stretch reads PQLSRTPQAAQQTEALASTGSQAQSAP. C2H2-type zinc fingers lie at residues 328-353, 359-383, 389-411, 417-439, and 448-471; these read MPCD…KYQH, FSCP…MKLH, YICE…RRIH, LQCE…QRKH, and FPCE…SKSH. Residues 469 to 519 are disordered; the sequence is KSHPALLLAPQESPSGPLEPCPSISAPGPLGSSEGSRPSASPQAPTLLPQQ. Residue S470 is modified to Phosphoserine; by AMPK. The segment covering 501–519 has biased composition (polar residues); that stretch reads SEGSRPSASPQAPTLLPQQ.

Belongs to the krueppel C2H2-type zinc-finger protein family. Post-translationally, phosphorylation at Ser-470 results in loss of DNA-binding activity. In terms of tissue distribution, ubiquitous. Highly expressed in brain, thymus and spleen.

The protein localises to the nucleus. In terms of biological role, may act as an transcriptional repressor for PCK1 gene expression, in turn may participate in the hepatic gluconeogenesis regulation through the activated AMPK signaling pathway. The protein is Zinc finger protein 692 (ZNF692) of Homo sapiens (Human).